A 1079-amino-acid polypeptide reads, in one-letter code: DNA-directed RNA polymerase subunit beta (1079 aa).

A disordered region spans residues 963–982 (RSTGPYSRVTQQPVKGRARR). Over residues 966–975 (GPYSRVTQQP) the composition is skewed to polar residues.

It belongs to the RNA polymerase beta chain family. As to quaternary structure, in plastids the minimal PEP RNA polymerase catalytic core is composed of four subunits: alpha, beta, beta', and beta''. When a (nuclear-encoded) sigma factor is associated with the core the holoenzyme is formed, which can initiate transcription.

It localises to the plastid. The protein resides in the chloroplast. It catalyses the reaction RNA(n) + a ribonucleoside 5'-triphosphate = RNA(n+1) + diphosphate. Its function is as follows. DNA-dependent RNA polymerase catalyzes the transcription of DNA into RNA using the four ribonucleoside triphosphates as substrates. The polypeptide is DNA-directed RNA polymerase subunit beta (Pelargonium hortorum (Common geranium)).